We begin with the raw amino-acid sequence, 95 residues long: Probable FAD-linked sulfhydryl oxidase OPG072 (95 aa).

Topologically, residues 1-8 are intravirion; it reads MNPKHWGR. Residues 1–95 form the ERV/ALR sulfhydryl oxidase domain; it reads MNPKHWGRAA…AIDVSKVKPL (95 aa). A helical transmembrane segment spans residues 9–25; that stretch reads AAWTIIFIVLSQAGLDG. Residues 26–95 lie on the Virion surface side of the membrane; it reads NIEACKRKLY…AIDVSKVKPL (70 aa). Cys-43 and Cys-46 form a disulfide bridge.

This sequence belongs to the orthopoxvirus OPG072 family. Interacts with OPG128; this interaction involves formation of a transient disulfide-bonded intermediate, allowing disulfide bond transfer. Requires FAD as cofactor.

It is found in the virion membrane. The protein localises to the host cytoplasm. The enzyme catalyses 2 R'C(R)SH + O2 = R'C(R)S-S(R)CR' + H2O2. Functionally, FAD-dependent sulfhydryl oxidase that catalyzes disulfide bond formation. The complete pathway for formation of disulfide bonds in intracellular virion membrane proteins sequentially involves thiol-disulfide transfer between OPG072, OPG128 and OPG088. In Variola virus (isolate Human/India/Ind3/1967) (VARV), this protein is Probable FAD-linked sulfhydryl oxidase OPG072 (OPG072).